The following is a 636-amino-acid chain: DNA ligase (636 aa).

The active-site N6-AMP-lysine intermediate is lysine 113. A BRCT domain is found at 560–636; sequence NSEGIFQNQT…KSSFSKKFEK (77 aa).

The protein belongs to the NAD-dependent DNA ligase family.

It carries out the reaction NAD(+) + (deoxyribonucleotide)n-3'-hydroxyl + 5'-phospho-(deoxyribonucleotide)m = (deoxyribonucleotide)n+m + AMP + beta-nicotinamide D-nucleotide.. Catalyzes the formation of phosphodiester linkages between 5'-phosphoryl and 3'-hydroxyl groups in double-stranded DNA using NAD as a coenzyme and as the energy source for the reaction. This chain is DNA ligase, found in Acanthamoeba polyphaga (Amoeba).